We begin with the raw amino-acid sequence, 498 residues long: Inosine-5'-monophosphate dehydrogenase (498 aa).

CBS domains are found at residues 98–155 (MVVN…EQKI) and 159–216 (MTRE…PHAS). Residues aspartate 253 and 303 to 305 (GIG) contribute to the NAD(+) site. Positions 305 and 307 each coordinate K(+). An IMP-binding site is contributed by serine 308. Residue cysteine 310 participates in K(+) binding. Residue cysteine 310 is the Thioimidate intermediate of the active site. IMP-binding positions include 343-345 (DGG), 366-367 (GS), and 390-394 (YRGMG). Catalysis depends on arginine 406, which acts as the Proton acceptor. Glutamate 421 contacts IMP. The K(+) site is built by glutamate 475, serine 476, and histidine 477.

The protein belongs to the IMPDH/GMPR family. Homotetramer. K(+) serves as cofactor.

The enzyme catalyses IMP + NAD(+) + H2O = XMP + NADH + H(+). The protein operates within purine metabolism; XMP biosynthesis via de novo pathway; XMP from IMP: step 1/1. With respect to regulation, mycophenolic acid (MPA) is a non-competitive inhibitor that prevents formation of the closed enzyme conformation by binding to the same site as the amobile flap. In contrast, mizoribine monophosphate (MZP) is a competitive inhibitor that induces the closed conformation. MPA is a potent inhibitor of mammalian IMPDHs but a poor inhibitor of the bacterial enzymes. MZP is a more potent inhibitor of bacterial IMPDH. Functionally, catalyzes the conversion of inosine 5'-phosphate (IMP) to xanthosine 5'-phosphate (XMP), the first committed and rate-limiting step in the de novo synthesis of guanine nucleotides, and therefore plays an important role in the regulation of cell growth. The protein is Inosine-5'-monophosphate dehydrogenase of Rhizobium tropici.